The following is a 178-amino-acid chain: Large ribosomal subunit protein uL6 (178 aa).

The protein belongs to the universal ribosomal protein uL6 family. As to quaternary structure, part of the 50S ribosomal subunit. Interacts weakly with protein L13.

Functionally, this protein binds to the 23S rRNA, and is important in its secondary structure. It is located near the subunit interface in the base of the L7/L12 stalk, and near the tRNA binding site of the peptidyltransferase center. This chain is Large ribosomal subunit protein uL6, found in Haloarcula marismortui (strain ATCC 43049 / DSM 3752 / JCM 8966 / VKM B-1809) (Halobacterium marismortui).